Reading from the N-terminus, the 355-residue chain is Syntaxin-5 (355 aa).

Over 1–333 (MIPRKRYGSK…KYFQSVTSNR (333 aa)) the chain is Cytoplasmic. An IxM motif; signal for cargo packaging into COPII-coated vesicles motif is present at residues 245-247 (IDM). Residues 263–325 (DSYIQSRADT…EAAHSEILKY (63 aa)) enclose the t-SNARE coiled-coil homology domain. Positions 287 to 318 (FQQLAHMVKEQEETIQRIDENVLGAQLDVEAA) form a coiled coil. The chain crosses the membrane as a helical; Anchor for type IV membrane protein span at residues 334 to 354 (WLMVKIFLILIVFFIIFVVFL). A topological domain (vesicular) is located at residue alanine 355.

The protein belongs to the syntaxin family. As to quaternary structure, part of a ternary complex containing STX5A, NSFL1C and VCP. Part of a unique SNARE complex composed of the Golgi SNAREs GOSR1, GOSR2, YKT6 and VTI1A. Component of a SNARE complex consisting of STX5, YKT6, GOSR1 and BET1L. Interacts with BET1L. Interacts with BET1. Interacts with COG4. Interacts with GM130/GOLGA2. Interacts (via IxM motif) with SEC24C and SEC24D; mediates STX5 packaging into COPII-coated vesicles. Interacts with VLDLR; this interaction mediates VLDLR translocation from the endoplasmic reticulum to the plasma membrane.

The protein localises to the endoplasmic reticulum-Golgi intermediate compartment membrane. It is found in the golgi apparatus membrane. Its function is as follows. Mediates endoplasmic reticulum to Golgi transport. Together with p115/USO1 and GM130/GOLGA2, involved in vesicle tethering and fusion at the cis-Golgi membrane to maintain the stacked and inter-connected structure of the Golgi apparatus. In terms of biological role, required for Golgi to endoplasmic reticulum retrogade transport, and for intra-Golgi transport. In Mus musculus (Mouse), this protein is Syntaxin-5 (Stx5).